The primary structure comprises 182 residues: KxDL motif-containing protein 1 (182 aa).

Residues T124–S135 are compositionally biased toward low complexity. Positions T124–I182 are disordered. A compositionally biased stretch (basic and acidic residues) spans S155–G176.

This sequence belongs to the KXD1 family. As to quaternary structure, associates with the BLOC-1 complex.

The protein resides in the lysosome membrane. Functionally, as part of a BORC-like complex may play a role in lysosomes movement and localization at the cell periphery. Associated with the cytosolic face of lysosomes, this complex may couple lysosomes to microtubule plus-end-directed kinesin motor. May also be involved in the biogenesis of lysosome-related organelles such as melanosomes. In Danio rerio (Zebrafish), this protein is KxDL motif-containing protein 1 (kxd1).